The sequence spans 321 residues: Pirin-like protein 2 (321 aa).

Residues His88, His90, His132, and Glu134 each coordinate Fe cation.

This sequence belongs to the pirin family. Interacts with RD21A, RD21B and XCP2.

The protein resides in the cytoplasm. The protein localises to the cytosol. It localises to the nucleus. Its function is as follows. Involved in susceptibility to the bacterial plant pathogen Ralstonia solanacearum. Stabilizes the xylem cysteine protease XCP2 by blocking its autolysis. The polypeptide is Pirin-like protein 2 (Arabidopsis thaliana (Mouse-ear cress)).